The chain runs to 433 residues: Homeobox protein Hox-D3 (433 aa).

Disordered stretches follow at residues 44–198 (STPH…SKRV), 258–280 (GILHSPAGQSPERSPPLGGAAGH), and 401–433 (HHGPCDPHPTYTDLSAHHSSQGRLPEAPKLTHL). Over residues 58–74 (SLDSDYPSSACSIQSSA) the composition is skewed to polar residues. The segment covering 97 to 106 (NSQGGGGGNQ) has biased composition (gly residues). The span at 116–132 (PPQPPPPPPPTLPPSSP) shows a compositional bias: pro residues. A compositionally biased stretch (low complexity) spans 146–159 (GGLSASSSSSTISK). The short motif at 161–166 (IFPWMK) is the Antp-type hexapeptide element. The segment covering 171-183 (NSKQKNSCATSGE) has biased composition (polar residues). The homeobox DNA-binding region spans 195–254 (SKRVRTAYTSAQLVELEKEFHFNRYLCRPRRVEMANLLNLTERQIKIWFQNRRMKYKKDQ).

The protein belongs to the Antp homeobox family. In terms of tissue distribution, detected in adult kidney, but not in other adult tissues tested.

The protein resides in the nucleus. Sequence-specific transcription factor which is part of a developmental regulatory system that provides cells with specific positional identities on the anterior-posterior axis. The sequence is that of Homeobox protein Hox-D3 (Hoxd3) from Mus musculus (Mouse).